Reading from the N-terminus, the 327-residue chain is RING-H2 finger protein ATL34 (327 aa).

A signal peptide spans 1–26 (MTIGKSPILLHHHVIFLLLLVLQVSG). The chain crosses the membrane as a helical span at residues 47-67 (AVIIAMLMFTLLFSMLACCVC). The RING-type; atypical zinc finger occupies 128 to 170 (CAICLNEFEDEETLRLMPPCSHAFHASCIDVWLSSRSTCPVCR). Residues 280–327 (LSHMKTLPQARSSREGYRSGSVGSERRGKGKEKEFGEGSFDRLKAEMV) are disordered. Positions 303–327 (SERRGKGKEKEFGEGSFDRLKAEMV) are enriched in basic and acidic residues.

Belongs to the RING-type zinc finger family. ATL subfamily.

It is found in the membrane. The enzyme catalyses S-ubiquitinyl-[E2 ubiquitin-conjugating enzyme]-L-cysteine + [acceptor protein]-L-lysine = [E2 ubiquitin-conjugating enzyme]-L-cysteine + N(6)-ubiquitinyl-[acceptor protein]-L-lysine.. It functions in the pathway protein modification; protein ubiquitination. The polypeptide is RING-H2 finger protein ATL34 (ATL34) (Arabidopsis thaliana (Mouse-ear cress)).